The chain runs to 349 residues: Probable esterase Cgl0839 (349 aa).

Residues 60 to 329 (GTHQTWFQQY…EDIAGHLGLF (270 aa)) form the AB hydrolase-1 domain. Ser142 functions as the Nucleophile in the catalytic mechanism. Active-site residues include Asp296 and His325.

Belongs to the AB hydrolase superfamily. Acetyl esterase family. Homodimer.

Functionally, esterase that catalyzes the hydrolysis of 4-nitrophenyl acetate in vitro. The chain is Probable esterase Cgl0839 from Corynebacterium glutamicum (strain ATCC 13032 / DSM 20300 / JCM 1318 / BCRC 11384 / CCUG 27702 / LMG 3730 / NBRC 12168 / NCIMB 10025 / NRRL B-2784 / 534).